A 436-amino-acid chain; its full sequence is Protein PhoH2 (436 aa).

In terms of domain architecture, PINc spans Arg12–Leu137.

It in the N-terminal section; belongs to the PINc/VapC protein family. The protein in the C-terminal section; belongs to the PhoH family.

It catalyses the reaction n ATP + n H2O + wound RNA = n ADP + n phosphate + unwound RNA.. It carries out the reaction ATP + H2O = ADP + phosphate + H(+). The enzyme catalyses GTP + H2O = GDP + phosphate + H(+). Its function is as follows. Unwinds and/or cleaves 5'-tailed RNA in vitro, the reaction is maximal with hydrolyzable ATP; double-stranded (ds)RNA and dsDNA are not unwound. Unlike the protein in mycobacteria there does not seem to be an antitoxin gene upstream, suggesting this is not a toxin-antitoxin system. Has ATPase and GTPase activities. This chain is Protein PhoH2, found in Thermobispora bispora (strain ATCC 19993 / DSM 43833 / CBS 139.67 / JCM 10125 / KCTC 9307 / NBRC 14880 / R51).